Consider the following 471-residue polypeptide: Ribulose bisphosphate carboxylase large chain (471 aa).

N6,N6,N6-trimethyllysine is present on K5. Substrate-binding residues include N114 and T164. Catalysis depends on K166, which acts as the Proton acceptor. Substrate is bound at residue K168. 3 residues coordinate Mg(2+): K192, D194, and E195. K192 carries the post-translational modification N6-carboxylysine. Residue H285 is the Proton acceptor of the active site. R286, H318, and S370 together coordinate substrate.

It belongs to the RuBisCO large chain family. Type I subfamily. As to quaternary structure, heterohexadecamer of 8 large chains and 8 small chains; disulfide-linked. The disulfide link is formed within the large subunit homodimers. It depends on Mg(2+) as a cofactor. Post-translationally, the disulfide bond which can form in the large chain dimeric partners within the hexadecamer appears to be associated with oxidative stress and protein turnover.

It localises to the plastid. It is found in the chloroplast. It catalyses the reaction 2 (2R)-3-phosphoglycerate + 2 H(+) = D-ribulose 1,5-bisphosphate + CO2 + H2O. The catalysed reaction is D-ribulose 1,5-bisphosphate + O2 = 2-phosphoglycolate + (2R)-3-phosphoglycerate + 2 H(+). RuBisCO catalyzes two reactions: the carboxylation of D-ribulose 1,5-bisphosphate, the primary event in carbon dioxide fixation, as well as the oxidative fragmentation of the pentose substrate in the photorespiration process. Both reactions occur simultaneously and in competition at the same active site. This chain is Ribulose bisphosphate carboxylase large chain, found in Deppea grandiflora.